The chain runs to 882 residues: Protein O-mannosyl-transferase TMTC1 (882 aa).

The Cytoplasmic segment spans residues 1–20 (MVVTTSARGGGGDRTPSRRR). The disordered stretch occupies residues 1–20 (MVVTTSARGGGGDRTPSRRR). A helical membrane pass occupies residues 21 to 41 (GCGLAPAGAAALLAGASCLCY). The Extracellular segment spans residues 42–110 (GRSLQGEFVH…KLNIFLTGMN (69 aa)). N-linked (GlcNAc...) asparagine glycosylation occurs at asparagine 86. A helical transmembrane segment spans residues 111 to 131 (PFYFHAVNIILHCLVTLVLMY). Residues 132-137 (TCDKTV) lie on the Cytoplasmic side of the membrane. The chain crosses the membrane as a helical span at residues 138–157 (FKNRGLAFVTALLFAVHPIH). Topologically, residues 158–160 (TEA) are extracellular. A helical membrane pass occupies residues 161–181 (VAGIVGRADVLACLLFLLAFL). Over 182–197 (SYNRSLDQGCVGGSFP) the chain is Cytoplasmic. Residues 198–218 (STVSPFFLLLSLFLGTCAMLV) form a helical membrane-spanning segment. Topologically, residues 219–221 (KET) are extracellular. The chain crosses the membrane as a helical span at residues 222 to 238 (GITVFGVCLVYDLFSLS). At 239–313 (NKQDKSSNGA…SPRAVWSMMR (75 aa)) the chain is on the cytoplasmic side. The interval 246-277 (NGALCPRSPQQPGSPQPSSLPGHPHRENGKQQ) is disordered. Low complexity predominate over residues 251–267 (PRSPQQPGSPQPSSLPG). The chain crosses the membrane as a helical span at residues 314 to 334 (FLTYSYLLAFNVWLLLAPVTL). Residues 335–354 (CYDWQVGSIPLVETIWDMRN) lie on the Extracellular side of the membrane. A helical membrane pass occupies residues 355 to 375 (LATIFLAVVMALLSLHCLAAF). Over 376-381 (KRLEHK) the chain is Cytoplasmic. A helical transmembrane segment spans residues 382 to 402 (EVLVGLLFLVFPFIPASNLFF). Position 403 (arginine 403) is a topological domain, extracellular. Residues 404 to 424 (VGFVVAERVLYMPSMGYCILF) traverse the membrane as a helical segment. The Cytoplasmic segment spans residues 425-438 (VHGLSKLCTWLNRC). The chain crosses the membrane as a helical span at residues 439 to 459 (GATTLIVSTVLLLLLFSWKTV). The Extracellular portion of the chain corresponds to 460-882 (KQNEIWLSRE…LQEVREKDQT (423 aa)). 10 TPR repeats span residues 483–516 (AKVH…YPRH), 517–547 (ASAL…HPQH), 548–581 (NRAL…GPEF), 582–615 (ADAY…CPDS), 616–649 (SDLH…SPSH), 650–682 (HVAM…VAHK), 683–716 (AEIL…QPSQ), 751–784 (LECY…KPKD), 789–822 (SELF…NPDQ), and 823–856 (AQAW…VPDS).

It belongs to the TMTC family. In terms of assembly, may interact with FAM168B.

The protein localises to the membrane. It is found in the endoplasmic reticulum. The enzyme catalyses a di-trans,poly-cis-dolichyl beta-D-mannosyl phosphate + L-seryl-[protein] = 3-O-(alpha-D-mannosyl)-L-seryl-[protein] + a di-trans,poly-cis-dolichyl phosphate + H(+). It carries out the reaction a di-trans,poly-cis-dolichyl beta-D-mannosyl phosphate + L-threonyl-[protein] = 3-O-(alpha-D-mannosyl)-L-threonyl-[protein] + a di-trans,poly-cis-dolichyl phosphate + H(+). Its pathway is protein modification; protein glycosylation. Transfers mannosyl residues to the hydroxyl group of serine or threonine residues. The 4 members of the TMTC family are O-mannosyl-transferases dedicated primarily to the cadherin superfamily, each member seems to have a distinct role in decorating the cadherin domains with O-linked mannose glycans at specific regions. Also acts as O-mannosyl-transferase on other proteins such as PDIA3. The sequence is that of Protein O-mannosyl-transferase TMTC1 from Homo sapiens (Human).